We begin with the raw amino-acid sequence, 354 residues long: S-adenosylmethionine:tRNA ribosyltransferase-isomerase (354 aa).

It belongs to the QueA family. Monomer.

It is found in the cytoplasm. It carries out the reaction 7-aminomethyl-7-carbaguanosine(34) in tRNA + S-adenosyl-L-methionine = epoxyqueuosine(34) in tRNA + adenine + L-methionine + 2 H(+). The protein operates within tRNA modification; tRNA-queuosine biosynthesis. Transfers and isomerizes the ribose moiety from AdoMet to the 7-aminomethyl group of 7-deazaguanine (preQ1-tRNA) to give epoxyqueuosine (oQ-tRNA). This chain is S-adenosylmethionine:tRNA ribosyltransferase-isomerase, found in Dichelobacter nodosus (strain VCS1703A).